The sequence spans 455 residues: Exodeoxyribonuclease 7 large subunit (455 aa).

This sequence belongs to the XseA family. Heterooligomer composed of large and small subunits.

The protein localises to the cytoplasm. It catalyses the reaction Exonucleolytic cleavage in either 5'- to 3'- or 3'- to 5'-direction to yield nucleoside 5'-phosphates.. Functionally, bidirectionally degrades single-stranded DNA into large acid-insoluble oligonucleotides, which are then degraded further into small acid-soluble oligonucleotides. This chain is Exodeoxyribonuclease 7 large subunit, found in Koribacter versatilis (strain Ellin345).